The sequence spans 600 residues: Elongation factor 4 (600 aa).

Positions 5 to 187 (SRIRNFSIIA…AIVTRLPPPK (183 aa)) constitute a tr-type G domain. Residues 17–22 (DHGKST) and 134–137 (NKID) each bind GTP.

Belongs to the TRAFAC class translation factor GTPase superfamily. Classic translation factor GTPase family. LepA subfamily.

The protein resides in the cell inner membrane. It carries out the reaction GTP + H2O = GDP + phosphate + H(+). Functionally, required for accurate and efficient protein synthesis under certain stress conditions. May act as a fidelity factor of the translation reaction, by catalyzing a one-codon backward translocation of tRNAs on improperly translocated ribosomes. Back-translocation proceeds from a post-translocation (POST) complex to a pre-translocation (PRE) complex, thus giving elongation factor G a second chance to translocate the tRNAs correctly. Binds to ribosomes in a GTP-dependent manner. The protein is Elongation factor 4 of Rhodospirillum centenum (strain ATCC 51521 / SW).